A 514-amino-acid polypeptide reads, in one-letter code: UDP-N-acetylmuramoyl-L-alanyl-D-glutamate--2,6-diaminopimelate ligase (514 aa).

UDP-N-acetyl-alpha-D-muramoyl-L-alanyl-D-glutamate is bound at residue T37. G125–S131 contributes to the ATP binding site. Residues T167–T168, S194, Q200, and R202 each bind UDP-N-acetyl-alpha-D-muramoyl-L-alanyl-D-glutamate. K234 bears the N6-carboxylysine mark. Meso-2,6-diaminopimelate is bound by residues R406, D430 to R433, G481, and E485. Positions D430–R433 match the Meso-diaminopimelate recognition motif motif.

Belongs to the MurCDEF family. MurE subfamily. It depends on Mg(2+) as a cofactor. Carboxylation is probably crucial for Mg(2+) binding and, consequently, for the gamma-phosphate positioning of ATP.

The protein localises to the cytoplasm. It carries out the reaction UDP-N-acetyl-alpha-D-muramoyl-L-alanyl-D-glutamate + meso-2,6-diaminopimelate + ATP = UDP-N-acetyl-alpha-D-muramoyl-L-alanyl-gamma-D-glutamyl-meso-2,6-diaminopimelate + ADP + phosphate + H(+). It participates in cell wall biogenesis; peptidoglycan biosynthesis. Catalyzes the addition of meso-diaminopimelic acid to the nucleotide precursor UDP-N-acetylmuramoyl-L-alanyl-D-glutamate (UMAG) in the biosynthesis of bacterial cell-wall peptidoglycan. In Ralstonia nicotianae (strain ATCC BAA-1114 / GMI1000) (Ralstonia solanacearum), this protein is UDP-N-acetylmuramoyl-L-alanyl-D-glutamate--2,6-diaminopimelate ligase.